A 535-amino-acid chain; its full sequence is UDP-glucuronosyltransferase 1A1 (535 aa).

An N-terminal signal peptide occupies residues 1-29; sequence MSVVCRSSCSLLLLPCLLLCVLGPSASHA. N-linked (GlcNAc...) asparagine glycosylation is found at Asn-89, Asn-297, and Asn-435. The helical transmembrane segment at 493–509 threads the bilayer; the sequence is VIGFLLAIVLTVVFIVY.

The protein belongs to the UDP-glycosyltransferase family. In terms of assembly, homodimers. Homooligomer. Interacts with UGT1A3, UGT1A4, UGT1A6, UGT1A7, UGT1A8, UGT1A9 and UGT1A10 to form heterodimers.

The protein resides in the endoplasmic reticulum membrane. The catalysed reaction is glucuronate acceptor + UDP-alpha-D-glucuronate = acceptor beta-D-glucuronoside + UDP + H(+). It carries out the reaction 17beta-estradiol + UDP-alpha-D-glucuronate = 17beta-estradiol 3-O-(beta-D-glucuronate) + UDP + H(+). The enzyme catalyses 2-hydroxyestrone + UDP-alpha-D-glucuronate = 2-hydroxyestrone 3-O-(beta-D-glucuronate) + UDP + H(+). It catalyses the reaction 2-hydroxy-17beta-estradiol + UDP-alpha-D-glucuronate = 2-hydroxy-17beta-estradiol 3-O-(beta-D-glucuronate) + UDP + H(+). The catalysed reaction is 2-methoxy-17beta-estradiol + UDP-alpha-D-glucuronate = 2-methoxy-17beta-estradiol 3-O-(beta-D-glucuronate) + UDP + H(+). It carries out the reaction 17alpha-estradiol + UDP-alpha-D-glucuronate = 17alpha-estradiol 3-O-(beta-D-glucuronate) + UDP + H(+). The enzyme catalyses 16beta,17beta-estriol + UDP-alpha-D-glucuronate = 16beta,17beta-estriol 16-O-(beta-D-glucuronate) + UDP + H(+). It catalyses the reaction losartan + UDP-alpha-D-glucuronate = losartan-2-N-beta-D-glucuronide + UDP. The catalysed reaction is prunetin + UDP-alpha-D-glucuronate = prunetin-4'-O-beta-D-glucuronide + UDP. It carries out the reaction SN-38 + UDP-alpha-D-glucuronate = SN-38 O-beta-D-glucuronide + UDP + H(+). The enzyme catalyses (4Z,15Z)-bilirubin IXalpha + UDP-alpha-D-glucuronate = (4Z,15Z)-bilirubin IXalpha C12-beta-D-glucuronoside + UDP. It catalyses the reaction (4Z,15Z)-bilirubin IXalpha + UDP-alpha-D-glucuronate = (4Z,15Z)-bilirubin IXalpha C8-beta-D-glucuronoside + UDP. The catalysed reaction is (4Z,15Z)-bilirubin IXalpha C8-beta-D-glucuronoside + UDP-alpha-D-glucuronate = (4Z,15Z)-bilirubin IXalpha C8,C12-beta-D-bisglucuronoside + UDP. It carries out the reaction (4Z,15Z)-bilirubin IXalpha C12-beta-D-glucuronoside + UDP-alpha-D-glucuronate = (4Z,15Z)-bilirubin IXalpha C8,C12-beta-D-bisglucuronoside + UDP. The enzyme catalyses 8-iso-prostaglandin F2alpha + UDP-alpha-D-glucuronate = 8-iso-prostaglandin F2alpha-glucuronide + UDP + H(+). It catalyses the reaction (5Z,8Z,11Z,14Z)-eicosatetraenoate + UDP-alpha-D-glucuronate = O-[(5Z),(8Z),(11Z),(14Z)-eicosatetraenoyl]-beta-D-glucuronate + UDP. The catalysed reaction is 15-hydroxy-(5Z,8Z,11Z,13E)-eicosatetraenoate + UDP-alpha-D-glucuronate = 15-O-(beta-D-glucuronosyl)-(5Z,8Z,11Z,14Z)-eicosatetraenoate + UDP + H(+). It carries out the reaction 20-hydroxy-(5Z,8Z,11Z,14Z)-eicosatetraenoate + UDP-alpha-D-glucuronate = 20-O-(beta-D-glucuronosyl)-(5Z,8Z,11Z,14Z)-eicosatetraenoate + UDP + H(+). The enzyme catalyses prostaglandin B1 + UDP-alpha-D-glucuronate = 15-O-(beta-D-glucuronosyl)-prostaglandin B1 + UDP + H(+). It catalyses the reaction (E)-ferulate + UDP-alpha-D-glucuronate = (E)-4-O-(beta-D-glucuronosyl)-ferulate + UDP + H(+). The catalysed reaction is (E)-ferulate + UDP-alpha-D-glucuronate = (E)-ferulic acid beta-D-glucuronate ester + UDP. Its function is as follows. UDP-glucuronosyltransferase (UGT) that catalyzes phase II biotransformation reactions in which lipophilic substrates are conjugated with glucuronic acid to increase the metabolite's water solubility, thereby facilitating excretion into either the urine or bile. Essential for the elimination and detoxification of drugs, xenobiotics and endogenous compounds. Catalyzes the glucuronidation of endogenous estrogen hormones such as estradiol, estrone and estriol. Involved in the glucuronidation of bilirubin, a degradation product occurring in the normal catabolic pathway that breaks down heme in vertebrates. Involved in the glucuronidation of arachidonic acid (AA) and AA-derived eicosanoids including 15-HETE, 20-HETE, PGB1 and F2-isoprostane (8-iso-PGF2alpha). Involved in the glucuronidation of the phytochemical ferulic acid at the phenolic or the carboxylic acid group. Also catalyzes the glucuronidation the isoflavones genistein, daidzein, glycitein, formononetin, biochanin A and prunetin, which are phytoestrogens with anticancer and cardiovascular properties. Involved in the glucuronidation of the AGTR1 angiotensin receptor antagonist losartan, a drug which can inhibit the effect of angiotensin II. Involved in the biotransformation of 7-ethyl-10-hydroxycamptothecin (SN-38), the pharmacologically active metabolite of the anticancer drug irinotecan. The protein is UDP-glucuronosyltransferase 1A1 of Rattus norvegicus (Rat).